We begin with the raw amino-acid sequence, 100 residues long: Urease subunit gamma (100 aa).

This sequence belongs to the urease gamma subunit family. Heterotrimer of UreA (gamma), UreB (beta) and UreC (alpha) subunits. Three heterotrimers associate to form the active enzyme.

The protein localises to the cytoplasm. It catalyses the reaction urea + 2 H2O + H(+) = hydrogencarbonate + 2 NH4(+). Its pathway is nitrogen metabolism; urea degradation; CO(2) and NH(3) from urea (urease route): step 1/1. This chain is Urease subunit gamma, found in Ralstonia pickettii (strain 12J).